Here is a 354-residue protein sequence, read N- to C-terminus: Cysteine proteinase 1 (354 aa).

Positions 1–24 are cleaved as a signal peptide; it reads MARRNPLLFAIVVTILFVVCYGSA. Positions 25–125 are cleaved as a propeptide — activation peptide; the sequence is LIAQTPPPVD…HKEDVHVDDS (101 aa). Cystine bridges form between cysteine 150–cysteine 191, cysteine 184–cysteine 229, and cysteine 282–cysteine 330. Cysteine 153 is a catalytic residue. A glycan (N-linked (GlcNAc...) asparagine) is linked at asparagine 208. Catalysis depends on residues histidine 289 and asparagine 309.

The protein belongs to the peptidase C1 family.

Its function is as follows. The cysteine proteinases have a potential role in host-parasite interaction and virulence. This is Cysteine proteinase 1 (CYS1) from Leishmania pifanoi.